The primary structure comprises 220 residues: Ras-related protein Rab-11B (220 aa).

GTP is bound at residue 18–25 (GDSGVGKS). The Effector region motif lies at 40 to 48 (KLSTIGVEF). GTP-binding positions include 66-70 (DTAGQ) and 124-127 (NKSD). 2 S-geranylgeranyl cysteine lipidation sites follow: Cys-219 and Cys-220.

It belongs to the small GTPase superfamily. Rab family.

The protein resides in the cell membrane. The chain is Ras-related protein Rab-11B (rab11B) from Dictyostelium discoideum (Social amoeba).